A 143-amino-acid polypeptide reads, in one-letter code: Crossover junction endodeoxyribonuclease Hjc (143 aa).

E12 is a Mg(2+) binding site. The active site involves S32. Positions 42 and 55 each coordinate Mg(2+).

This sequence belongs to the Holliday junction resolvase Hjc family. As to quaternary structure, homodimer. It depends on Mg(2+) as a cofactor.

It carries out the reaction Endonucleolytic cleavage at a junction such as a reciprocal single-stranded crossover between two homologous DNA duplexes (Holliday junction).. In terms of biological role, a structure-specific endonuclease that resolves Holliday junction (HJ) intermediates during genetic recombination. Cleaves 4-way DNA junctions introducing paired nicks in opposing strands, leaving a 5'-terminal phosphate and a 3'-terminal hydroxyl group that are subsequently ligated to produce recombinant products. Its function is as follows. Hjc, Hjm (Hel308) and PINA coordinate HJ migration and cleavage of replication forks in a coordinated way. In Saccharolobus islandicus (strain REY15A) (Sulfolobus islandicus), this protein is Crossover junction endodeoxyribonuclease Hjc.